The sequence spans 654 residues: Mitochondrial-processing peptidase subunit alpha-1 (654 aa).

Positions serine 73–asparagine 94 are disordered. Positions histidine 381–glutamate 446 form a coiled coil.

It belongs to the peptidase M16 family. Heterodimer of alpha and beta subunits, forming the mitochondrial processing protease (MPP) in which subunit alpha is involved in substrate recognition and binding and subunit beta is the catalytic subunit.

The protein localises to the mitochondrion matrix. Substrate recognition and binding subunit of the essential mitochondrial processing protease (MPP), which cleaves the mitochondrial sequence off newly imported precursors proteins. This Dictyostelium discoideum (Social amoeba) protein is Mitochondrial-processing peptidase subunit alpha-1 (mppA1).